A 399-amino-acid polypeptide reads, in one-letter code: Fluconazole resistance protein 3 (399 aa).

Disordered regions lie at residues 1 to 21 (MNFKTENSTTPNGDWSQSKAF) and 103 to 197 (HPYI…EKDA). The span at 103–145 (HPYITNTNNHLSYSNSSEEFSPIGNNMSPDSTGGANSNNFTSG) shows a compositional bias: polar residues. Positions 167–184 (SGNNNNNNGTSRSSQSSS) are enriched in low complexity. In terms of domain architecture, bZIP spans 210-273 (EELQMKRKAQ…ISIATENEIL (64 aa)). Positions 215–234 (KRKAQNRAAQRAFRERKESK) are basic motif. The interval 235–242 (LKELEAKL) is leucine-zipper.

Belongs to the bZIP family.

It localises to the nucleus. Functionally, transcription factor that confers fluconazole resistance in S.cerevisiae by activation of the PDR5 gene. Can also activate the transcription of S.cerevisiae genes involved in 4-nitroquinoline-N-oxide resistance. This Candida albicans (Yeast) protein is Fluconazole resistance protein 3 (FCR3).